Here is a 211-residue protein sequence, read N- to C-terminus: Outer surface protein C (211 aa).

An N-terminal signal peptide occupies residues 1 to 18 (MKKNTLSAILMTLFLFIS). Residue Cys-19 is the site of N-palmitoyl cysteine attachment. Cys-19 is lipidated: S-diacylglycerol cysteine.

The protein belongs to the OspC lipoprotein family. In terms of assembly, homodimer. Interacts with tick I.ricinus salivary protein Iric-1, Iric-2 and Iric-3. Binds human (host) plasminogen.

Its subcellular location is the cell outer membrane. The protein localises to the cell surface. In terms of biological role, major immunodominant protein in mammalian hosts. Required for initial stages of mammalian infection. Inhibits macrophage-mediated phagocytosis of the bacteria. Binds human plasminogen; this probably confers an extracellular protease activity on the bacteria that allows it to traverse tissue. Interaction with tick I.ricinus salivary protein Salp15 protects the bacteria from antibody-mediated killing in vitro and in vivo. The sequence is that of Outer surface protein C from Borreliella burgdorferi (Lyme disease spirochete).